A 95-amino-acid polypeptide reads, in one-letter code: Small ribosomal subunit protein bS6 (95 aa).

It belongs to the bacterial ribosomal protein bS6 family.

In terms of biological role, binds together with bS18 to 16S ribosomal RNA. The polypeptide is Small ribosomal subunit protein bS6 (Symbiobacterium thermophilum (strain DSM 24528 / JCM 14929 / IAM 14863 / T)).